Reading from the N-terminus, the 291-residue chain is Gamma-sarcoglycan (291 aa).

Residues 1–37 (MVREQYTTATEGICIERPENQYVYKIGIYGWRKRCLY) lie on the Cytoplasmic side of the membrane. Residues 38–58 (LFVLLLLIILVVNLALTIWIL) form a helical; Signal-anchor for type II membrane protein membrane-spanning segment. Residues 59–291 (KVMWFSPAGM…TCQEHNHICL (233 aa)) are Extracellular-facing. Asn110 is a glycosylation site (N-linked (GlcNAc...) asparagine). 2 disulfide bridges follow: Cys265–Cys290 and Cys267–Cys283.

This sequence belongs to the sarcoglycan beta/delta/gamma/zeta family. Interacts with the syntrophin SNTA1. Cross-link to form 2 major subcomplexes: one consisting of SGCB, SGCD and SGCG and the other consisting of SGCB and SGCD. The association between SGCB and SGCG is particularly strong while SGCA is loosely associated with the other sarcoglycans. Interacts with FLNC. Expressed in skeletal and heart muscle.

The protein resides in the cell membrane. The protein localises to the sarcolemma. It is found in the cytoplasm. Its subcellular location is the cytoskeleton. Component of the sarcoglycan complex, a subcomplex of the dystrophin-glycoprotein complex which forms a link between the F-actin cytoskeleton and the extracellular matrix. This is Gamma-sarcoglycan (SGCG) from Homo sapiens (Human).